We begin with the raw amino-acid sequence, 383 residues long: DNA-directed RNA polymerase subunit alpha (383 aa).

The tract at residues 1 to 240 (MEKKTGLIQF…NLFHQISPPL (240 aa)) is alpha N-terminal domain (alpha-NTD). Positions 306-383 (IDKQMNDSVN…RFNMELLPTK (78 aa)) are alpha C-terminal domain (alpha-CTD).

The protein belongs to the RNA polymerase alpha chain family. In plastids the minimal PEP RNA polymerase catalytic core is composed of four subunits: alpha, beta, beta', and beta''. When a (nuclear-encoded) sigma factor is associated with the core the holoenzyme is formed, which can initiate transcription.

Its subcellular location is the plastid. The protein resides in the chloroplast. The enzyme catalyses RNA(n) + a ribonucleoside 5'-triphosphate = RNA(n+1) + diphosphate. Its function is as follows. DNA-dependent RNA polymerase catalyzes the transcription of DNA into RNA using the four ribonucleoside triphosphates as substrates. This Staurastrum punctulatum (Green alga) protein is DNA-directed RNA polymerase subunit alpha.